The primary structure comprises 115 residues: T-cell receptor gamma chain V region V108B (115 aa).

Residues 1-18 form the signal peptide; sequence MLLLRWPTFCCLWVFGLG. The tract at residues 19 to 115 is v segment; sequence QLEQTELSVT…EATYYCAVWI (97 aa).

The chain is T-cell receptor gamma chain V region V108B (Tcrg-V1) from Mus musculus (Mouse).